Reading from the N-terminus, the 122-residue chain is Gene 20 protein (122 aa).

The sequence is that of Gene 20 protein (20) from Mycobacterium phage D29 (Mycobacteriophage D29).